Consider the following 1309-residue polypeptide: Phospholipase A I (1309 aa).

LRR repeat units lie at residues 155–178 (LPLL…IGKL), 180–201 (NLKI…LRQC), 203–223 (GLVE…DFRA), and 224–248 (MAGL…PLHQ). ARM repeat units lie at residues 315 to 356 (DEGN…SLAR), 401 to 439 (SVSQ…NLAF), and 440 to 481 (CLEN…ILGE). Residues 502–746 (LTMDGGGMKG…VANNPTIFAI (245 aa)) enclose the PNPLA domain. Positions 506-511 (GGGMKG) match the GXGXXG motif. A GXSXG motif is present at residues 538–542 (GTSTG). The Nucleophile role is filled by Ser-540. Residue Asp-733 is the Proton acceptor of the active site. The DGA/G motif lies at 733–735 (DGA). Residues 1183-1253 (VIGPSNEPQE…EDSDHEKTNR (71 aa)) form a disordered region. A compositionally biased stretch (polar residues) spans 1188-1208 (NEPQETPLITSQGSSEYNIGD). Acidic residues predominate over residues 1216–1235 (GEEEDEDEEVNEETEREEME).

This sequence belongs to the patatin family.

The protein resides in the plastid. It is found in the chloroplast. In terms of biological role, possesses non-specific lipolytic acyl hydrolase (LAH) activity. Catalyzes the hydrolysis of the galactolipids monogalactosyldiacylglycerol (MGDG) and digalactosyldiacylglycerol (DGDG), and less efficiently the phoshpolipids phosphatidylcholine (PC), phosphatidylethanolamine (PE), phosphatidylglycerol (PG), phosphatidylserine (PS) and phosphatidylinositol (PI). Hydrolyzes phospholipids at both the sn-1 and sn-2 positions. Involved in basal jasmonic acid production and promotes resistance to the necrotrophic fungal pathogen Botrytis cinerea. The sequence is that of Phospholipase A I (PLA1) from Arabidopsis thaliana (Mouse-ear cress).